A 420-amino-acid chain; its full sequence is Protein translocase subunit SecF (420 aa).

6 helical membrane-spanning segments follow: residues 7-27 (FSLLFLPCAILSVVLIGAGVL), 250-270 (LLVRQALLLVLGALVLIFLYV), 276-296 (WFFALGAIVALVHDACIMVSF), 309-327 (IAAILTIIGYSINDTVVVF), 358-378 (VVTTVTTLLAALMLYVFTEGG), and 388-408 (VGMVSGVYSTIYIAGGCIALI).

Belongs to the SecD/SecF family. SecF subfamily. As to quaternary structure, forms a complex with SecD. Part of the essential Sec protein translocation apparatus which comprises SecA, SecYEG and auxiliary proteins SecDF. Other proteins may also be involved.

The protein localises to the cell inner membrane. In terms of biological role, part of the Sec protein translocase complex. Interacts with the SecYEG preprotein conducting channel. SecDF uses the proton motive force (PMF) to complete protein translocation after the ATP-dependent function of SecA. The protein is Protein translocase subunit SecF of Treponema pallidum (strain Nichols).